The primary structure comprises 246 residues: Fasciclin-like arabinogalactan protein 11 (246 aa).

Residues 1–24 (MATSRTFIFSNLFIFFLVIATTYG) form the signal peptide. The 146-residue stretch at 34-179 (PTNITAILEK…LAVYQVDQVL (146 aa)) folds into the FAS1 domain. N-linked (GlcNAc...) asparagine glycosylation is found at asparagine 36, asparagine 68, asparagine 141, and asparagine 150. A disordered region spans residues 193–222 (PAPEKGGSVSKGSASGGDDGGDSTDSSDAE). Serine 219 is lipidated: GPI-anchor amidated serine. Positions 220–246 (DAERTGFGFGIRITTVAAIAASSSLWI) are cleaved as a propeptide — removed in mature form.

It belongs to the fasciclin-like AGP family. In terms of tissue distribution, expressed in the sclerenchyma cells of inflorescence stems and siliques.

It is found in the cell membrane. Functionally, may be a cell surface adhesion protein. The polypeptide is Fasciclin-like arabinogalactan protein 11 (FLA11) (Arabidopsis thaliana (Mouse-ear cress)).